Here is a 187-residue protein sequence, read N- to C-terminus: Plasmodium-specific hydrophobic abundant protein (187 aa).

A signal peptide spans 1 to 18 (MMKYVFVALCLFAVVALA).

It to HAP-S protein.

It is found in the membrane. This is Plasmodium-specific hydrophobic abundant protein from Physarum polycephalum (Slime mold).